We begin with the raw amino-acid sequence, 418 residues long: 3-isopropylmalate dehydratase large subunit 1 (418 aa).

Residues Cys-298, Cys-358, and Cys-361 each coordinate [4Fe-4S] cluster.

Belongs to the aconitase/IPM isomerase family. LeuC type 2 subfamily. In terms of assembly, heterodimer of LeuC and LeuD. Requires [4Fe-4S] cluster as cofactor.

The catalysed reaction is (2R,3S)-3-isopropylmalate = (2S)-2-isopropylmalate. Its pathway is amino-acid biosynthesis; L-leucine biosynthesis; L-leucine from 3-methyl-2-oxobutanoate: step 2/4. Catalyzes the isomerization between 2-isopropylmalate and 3-isopropylmalate, via the formation of 2-isopropylmaleate. The chain is 3-isopropylmalate dehydratase large subunit 1 from Archaeoglobus fulgidus (strain ATCC 49558 / DSM 4304 / JCM 9628 / NBRC 100126 / VC-16).